The chain runs to 99 residues: uncharacterized protein (99 aa).

Residues M1 to F99 are disordered. Positions Q19–E29 are enriched in polar residues.

This is an uncharacterized protein from Schizosaccharomyces pombe (strain 972 / ATCC 24843) (Fission yeast).